The chain runs to 228 residues: uncharacterized protein (228 aa).

Positions 1–19 are cleaved as a signal peptide; it reads MYRYTWLLWWITILLRIQQ. N-linked (GlcNAc...) asparagine; by host glycosylation is found at Asn-41, Asn-93, Asn-100, Asn-128, and Asn-164. A helical membrane pass occupies residues 189 to 209; sequence MWIIPLVIVTTIIVLICFKFP.

Belongs to the HHV-5 UL9 family.

It is found in the host membrane. This is an uncharacterized protein from Homo sapiens (Human).